A 175-amino-acid polypeptide reads, in one-letter code: Major pollen allergen Pha a 5.4 (175 aa).

The protein belongs to the Poa p IX/Phl p VI allergen family.

The protein is Major pollen allergen Pha a 5.4 of Phalaris aquatica (Canary grass).